A 225-amino-acid chain; its full sequence is mRNA-decapping protein D10 (225 aa).

Residues 35–218 form the Nudix hydrolase domain; that stretch reads AKYPLSVIGI…NVIKYIINAV (184 aa). The Nudix box signature appears at 116-137; that stretch reads GKIKDLESITNCLVREIKEELN. E122 contacts Mg(2+). E131 acts as the Nucleophile in catalysis. E135 serves as a coordination point for Mn(2+). Residue D157 participates in Mg(2+) binding.

Belongs to the Nudix hydrolase family. It depends on Mg(2+) as a cofactor. Mn(2+) serves as cofactor.

Functionally, decapping enzyme required for the removal of the 5'-end m7GpppN cap tethered to viral and host mRNAs to allow their decay in cells. May therefore accelerate viral and cellular mRNA turnover to eliminate competing host mRNAs and allow stage-specific synthesis of viral proteins. Acceleration of the turnover of cellular transcripts may even promote the shutoff of host protein synthesis. This Fowlpox virus (strain NVSL) (FPV) protein is mRNA-decapping protein D10.